Consider the following 650-residue polypeptide: Fructose-1,6-bisphosphatase class 3 (650 aa).

This sequence belongs to the FBPase class 3 family. Mn(2+) is required as a cofactor.

The catalysed reaction is beta-D-fructose 1,6-bisphosphate + H2O = beta-D-fructose 6-phosphate + phosphate. It functions in the pathway carbohydrate biosynthesis; gluconeogenesis. In Staphylococcus saprophyticus subsp. saprophyticus (strain ATCC 15305 / DSM 20229 / NCIMB 8711 / NCTC 7292 / S-41), this protein is Fructose-1,6-bisphosphatase class 3.